The following is a 152-amino-acid chain: UPF0225 protein YchJ (152 aa).

Belongs to the UPF0225 family.

The sequence is that of UPF0225 protein YchJ from Escherichia coli O6:K15:H31 (strain 536 / UPEC).